The chain runs to 275 residues: uncharacterized protein (275 aa).

2 disordered regions span residues 1–25 (MIGGERVLLGSQKREPSNEEDDQEQ) and 185–275 (QRGE…RHHM). Residues 228 to 239 (KPGDGEENAKDD) are compositionally biased toward basic and acidic residues.

This is an uncharacterized protein from Neurospora crassa (strain ATCC 24698 / 74-OR23-1A / CBS 708.71 / DSM 1257 / FGSC 987).